The primary structure comprises 398 residues: MAKEKYDRSKPHVNIGTIGHVDHGKTTLTAAITTVLARRLPSSVNQPKDYASIDAAPEERERGITINTAHVEYETATRHYAHIDAPGHADYVKNMITGAAQMDGAILVVASTDGPMPQTREHILLSRQVGVKHLIVFMNKVDLVDDEELLELVEMEIRDLLSEYDFPGDDLPVIQGSALKALEGDTKFEDIIMELMDTVDSYIPEPERDTDKPLLLPVEDVFSITGRGTVASGRIDRGTVRVNDEIEIVGIKEETKKAVVTGVEMFRKQLDEGLAGDNVGILLRGVQRDEIERGQVIAKPSSINPHTKFKGEVYILSKDEGGRHTPFFNNYRPQFYFRTTDVTGSIELPAGTEMVMPGDNVTINVELIHPIAVEQGTTFSIREGGRTVGSGIVSEIEA.

In terms of domain architecture, tr-type G spans 10–207; that stretch reads KPHVNIGTIG…TVDSYIPEPE (198 aa). A G1 region spans residues 19–26; it reads GHVDHGKT. 19-26 serves as a coordination point for GTP; sequence GHVDHGKT. T26 lines the Mg(2+) pocket. Residues 63 to 67 are G2; it reads GITIN. The G3 stretch occupies residues 84–87; the sequence is DAPG. GTP-binding positions include 84–88 and 139–142; these read DAPGH and NKVD. Positions 139–142 are G4; it reads NKVD. The interval 177 to 179 is G5; that stretch reads SAL.

The protein belongs to the TRAFAC class translation factor GTPase superfamily. Classic translation factor GTPase family. EF-Tu/EF-1A subfamily. In terms of assembly, monomer.

Its subcellular location is the cytoplasm. The catalysed reaction is GTP + H2O = GDP + phosphate + H(+). In terms of biological role, GTP hydrolase that promotes the GTP-dependent binding of aminoacyl-tRNA to the A-site of ribosomes during protein biosynthesis. The chain is Elongation factor Tu from Streptococcus pyogenes serotype M1.